A 511-amino-acid polypeptide reads, in one-letter code: MSAFLEFRGISKVFPGVRALSEVSFGIECGRVHGLLGENGAGKSTLLKILGGDYQPDGGQIAVEGRPVAFPNARAALAAGIAVIHQELQTVPELTVMDNLLLGHLPSRGGFIRQGEAMAWTRAQLARIGVDLDPKARLKHLSIGQRQMVEICKAILRDARVIALDEPTSSLSVRETDILFRLVKDLRAQGRALIYISHRLDEIFALCDGCTIFRDGRKVADFRSMADVTREQLVAQMVGRQIDDIFGYRPRAPGDVRLRVEGLMGPKLAEPASFAVRRGEIVGLFGLVGAGRSELARLVYGADRKTAGTVVLDGEPIRIRAVADAIRQGIVLCPEDRKEEGIIGCRSVSENINISCRRNRRPGWGGFNLFVDDRQEAKTADHYIARLRIKTPHRDQPIRLLSGGNQQKAILARWLAEDGMRVLIIDEPTRGIDVGAKNEIYQVLYELAERGVAVLMISSELPEILGVADRVLVMSEGRIAGELPRAQATEHAVLNLALRPRRDPCVAAQAA.

ABC transporter domains lie at 5-240 (LEFR…MVGR) and 240-501 (RQID…LRPR). 37 to 44 (GENGAGKS) contacts ATP.

This sequence belongs to the ABC transporter superfamily. Arabinose importer (TC 3.A.1.2.2) family. In terms of assembly, the complex is composed of two ATP-binding proteins (AraG), two transmembrane proteins (AraH) and a solute-binding protein (AraF).

Its subcellular location is the cell inner membrane. The catalysed reaction is L-arabinose(out) + ATP + H2O = L-arabinose(in) + ADP + phosphate + H(+). Its function is as follows. Part of the ABC transporter complex AraFGH involved in arabinose import. Responsible for energy coupling to the transport system. In Ralstonia nicotianae (strain ATCC BAA-1114 / GMI1000) (Ralstonia solanacearum), this protein is Arabinose import ATP-binding protein AraG.